The chain runs to 72 residues: Cell division protein ZapB (72 aa).

Residues 1-71 (MSLEILDQLE…IRSLLGKFDN (71 aa)) are a coiled coil.

This sequence belongs to the ZapB family. Homodimer. The ends of the coiled-coil dimer bind to each other, forming polymers. Interacts with FtsZ.

The protein localises to the cytoplasm. In terms of biological role, non-essential, abundant cell division factor that is required for proper Z-ring formation. It is recruited early to the divisome by direct interaction with FtsZ, stimulating Z-ring assembly and thereby promoting cell division earlier in the cell cycle. Its recruitment to the Z-ring requires functional FtsA or ZipA. The sequence is that of Cell division protein ZapB from Haemophilus influenzae (strain 86-028NP).